The sequence spans 560 residues: ATP synthase subunit beta, mitochondrial (560 aa).

The N-terminal 54 residues, 1 to 54 (MASRRLLASLLRQSAQRGGGLISRSLGNSIPKSASRASSRASPKGFLLNRAVQY), are a transit peptide targeting the mitochondrion. Disordered regions lie at residues 20–44 (GLISRSLGNSIPKSASRASSRASPK) and 58–81 (AAAPASQPSTPPKSGSEPSGKITD). 2 stretches are compositionally biased toward low complexity: residues 33-42 (SASRASSRAS) and 58-71 (AAAPASQPSTPPKS). 235 to 242 (GGAGVGKT) contributes to the ATP binding site.

This sequence belongs to the ATPase alpha/beta chains family. As to quaternary structure, F-type ATPases have 2 components, CF(1) - the catalytic core - and CF(0) - the membrane proton channel. CF(1) has five subunits: alpha(3), beta(3), gamma(1), delta(1), epsilon(1). CF(0) has three main subunits: a, b and c.

The protein resides in the mitochondrion. Its subcellular location is the mitochondrion inner membrane. The enzyme catalyses ATP + H2O + 4 H(+)(in) = ADP + phosphate + 5 H(+)(out). Functionally, mitochondrial membrane ATP synthase (F(1)F(0) ATP synthase or Complex V) produces ATP from ADP in the presence of a proton gradient across the membrane which is generated by electron transport complexes of the respiratory chain. F-type ATPases consist of two structural domains, F(1) - containing the extramembraneous catalytic core, and F(0) - containing the membrane proton channel, linked together by a central stalk and a peripheral stalk. During catalysis, ATP synthesis in the catalytic domain of F(1) is coupled via a rotary mechanism of the central stalk subunits to proton translocation. Subunits alpha and beta form the catalytic core in F(1). Rotation of the central stalk against the surrounding alpha(3)beta(3) subunits leads to hydrolysis of ATP in three separate catalytic sites on the beta subunits. This chain is ATP synthase subunit beta, mitochondrial (ATPB), found in Nicotiana plumbaginifolia (Leadwort-leaved tobacco).